Here is a 373-residue protein sequence, read N- to C-terminus: Histidinol-phosphate aminotransferase (373 aa).

Lys-230 is subject to N6-(pyridoxal phosphate)lysine.

Belongs to the class-II pyridoxal-phosphate-dependent aminotransferase family. Histidinol-phosphate aminotransferase subfamily. In terms of assembly, homodimer. Pyridoxal 5'-phosphate serves as cofactor.

The catalysed reaction is L-histidinol phosphate + 2-oxoglutarate = 3-(imidazol-4-yl)-2-oxopropyl phosphate + L-glutamate. The protein operates within amino-acid biosynthesis; L-histidine biosynthesis; L-histidine from 5-phospho-alpha-D-ribose 1-diphosphate: step 7/9. The polypeptide is Histidinol-phosphate aminotransferase (Synechococcus elongatus (strain ATCC 33912 / PCC 7942 / FACHB-805) (Anacystis nidulans R2)).